We begin with the raw amino-acid sequence, 237 residues long: E3 ubiquitin-protein ligase RNF166 (237 aa).

The RING-type zinc finger occupies 33-73 (CPICLEVYHRPVAIGSCGHTFCGECLQPCLQVPSPLCPLCR). 4 residues coordinate Zn(2+): Cys-98, Cys-101, His-113, and Cys-117. The C2HC RNF-type zinc-finger motif lies at 98–117 (CRGCNKKVTLAKMRAHISSC). In terms of domain architecture, UIM spans 221 to 237 (DEEAAFQAALALSLSEN).

The protein localises to the cytoplasm. It catalyses the reaction S-ubiquitinyl-[E2 ubiquitin-conjugating enzyme]-L-cysteine + [acceptor protein]-L-lysine = [E2 ubiquitin-conjugating enzyme]-L-cysteine + N(6)-ubiquitinyl-[acceptor protein]-L-lysine.. Its pathway is protein modification; protein ubiquitination. In terms of biological role, E3 ubiquitin-protein ligase that promotes the ubiquitination of different substrates. In turn, participates in different biological processes including interferon production or autophagy. Plays a role in the activation of RNA virus-induced interferon-beta production by promoting the ubiquitination of TRAF3 and TRAF6. Also plays a role in the early recruitment of autophagy adapters to bacteria. Mediates 'Lys-29' and 'Lys-33'-linked ubiquitination of SQSTM1 leading to xenophagic targeting of bacteria and inhibition of their replication. The chain is E3 ubiquitin-protein ligase RNF166 (Rnf166) from Mus musculus (Mouse).